Here is a 107-residue protein sequence, read N- to C-terminus: Thioredoxin (107 aa).

Residues 2-107 form the Thioredoxin domain; it reads SATPQVSDAS…TLASTLEKYL (106 aa). A disulfide bond links cysteine 32 and cysteine 35.

This sequence belongs to the thioredoxin family.

Component of the thioredoxin-thioredoxin reductase system. Participates in various redox reactions through the reversible oxidation of its active center dithiol to a disulfide and catalyzes dithiol-disulfide exchange reactions. This Synechocystis sp. (strain ATCC 27184 / PCC 6803 / Kazusa) protein is Thioredoxin (trxA).